Reading from the N-terminus, the 150-residue chain is Large ribosomal subunit protein uL13 (150 aa).

This sequence belongs to the universal ribosomal protein uL13 family. In terms of assembly, part of the 50S ribosomal subunit.

In terms of biological role, this protein is one of the early assembly proteins of the 50S ribosomal subunit, although it is not seen to bind rRNA by itself. It is important during the early stages of 50S assembly. This chain is Large ribosomal subunit protein uL13, found in Mesoplasma florum (strain ATCC 33453 / NBRC 100688 / NCTC 11704 / L1) (Acholeplasma florum).